Here is a 158-residue protein sequence, read N- to C-terminus: NAD(P)H-quinone oxidoreductase subunit N (158 aa).

This sequence belongs to the complex I NdhN subunit family. As to quaternary structure, NDH-1 can be composed of about 15 different subunits; different subcomplexes with different compositions have been identified which probably have different functions.

The protein localises to the cellular thylakoid membrane. The catalysed reaction is a plastoquinone + NADH + (n+1) H(+)(in) = a plastoquinol + NAD(+) + n H(+)(out). It catalyses the reaction a plastoquinone + NADPH + (n+1) H(+)(in) = a plastoquinol + NADP(+) + n H(+)(out). In terms of biological role, NDH-1 shuttles electrons from an unknown electron donor, via FMN and iron-sulfur (Fe-S) centers, to quinones in the respiratory and/or the photosynthetic chain. The immediate electron acceptor for the enzyme in this species is believed to be plastoquinone. Couples the redox reaction to proton translocation, and thus conserves the redox energy in a proton gradient. Cyanobacterial NDH-1 also plays a role in inorganic carbon-concentration. The sequence is that of NAD(P)H-quinone oxidoreductase subunit N from Prochlorococcus marinus (strain MIT 9312).